The primary structure comprises 317 residues: Transaldolase (317 aa).

Lys132 functions as the Schiff-base intermediate with substrate in the catalytic mechanism.

Belongs to the transaldolase family. Type 1 subfamily. Homodimer.

Its subcellular location is the cytoplasm. The catalysed reaction is D-sedoheptulose 7-phosphate + D-glyceraldehyde 3-phosphate = D-erythrose 4-phosphate + beta-D-fructose 6-phosphate. It participates in carbohydrate degradation; pentose phosphate pathway; D-glyceraldehyde 3-phosphate and beta-D-fructose 6-phosphate from D-ribose 5-phosphate and D-xylulose 5-phosphate (non-oxidative stage): step 2/3. Its function is as follows. Transaldolase is important for the balance of metabolites in the pentose-phosphate pathway. This is Transaldolase from Yersinia pseudotuberculosis serotype IB (strain PB1/+).